A 536-amino-acid polypeptide reads, in one-letter code: Inactive beta-amylase 9 (536 aa).

Ser-47 bears the Phosphoserine mark. Positions 511 to 536 (QASEAEVEAETASIGSGTGAPSLQTA) are disordered.

It belongs to the glycosyl hydrolase 14 family. In terms of tissue distribution, mostly expressed in young floral buds, flowers and roots, and, to a later extent, in stems and leaves.

Its subcellular location is the cytoplasm. This is Inactive beta-amylase 9 (BAM9) from Arabidopsis thaliana (Mouse-ear cress).